Here is a 533-residue protein sequence, read N- to C-terminus: SH3 and F-BAR domain-containing protein DDB_G0271676 (533 aa).

An F-BAR domain is found at 5–258; that stretch reads RQFSEDLWDK…GIESIDRERD (254 aa). Positions 76 to 186 form a coiled coil; it reads REQLELIGAL…ADKGDNEYRE (111 aa). Composition is skewed to basic and acidic residues over residues 126 to 155 and 162 to 184; these read LKTA…EDLS and KEQK…DNEY. Disordered stretches follow at residues 126-184 and 301-405; these read LKTA…DNEY and SRKS…INSN. 4 stretches are compositionally biased toward low complexity: residues 318 to 327, 340 to 360, 372 to 385, and 392 to 405; these read SIISSPQQPQ, NIII…NNSN, PQQQ…QLNN, and SLSK…INSN. 2 SH3 domains span residues 406–468 and 476–533; these read SNGE…DSSD and VAGR…VQVI.

This is SH3 and F-BAR domain-containing protein DDB_G0271676 from Dictyostelium discoideum (Social amoeba).